The primary structure comprises 446 residues: MSGQNNVVGVHYKVGRRIGEGSFGVIFEGTNLLNNQQVAIKFEPRRSDAPQLRDEYRTYKLLAGCTGIPNVYYFGQEGLHNILVIDLLGPSLEDLLDLCGRKFSVKTVAMAAKQMLARVQSIHEKSLVYRDIKPDNFLIGRPNSKNANMIYVVDFGMVKFYRDPVTKQHIPYREKKNLSGTARYMSINTHLGREQSRRDDLEALGHVFMYFLRGSLPWQGLKAATNKQKYERIGEKKQSTPLRELCAGFPEEFYKYMHYARNLAFDATPDYDYLQGLFSKVLERLNTTEDENFDWNLLNNGKGWQSLKSRNAETENQRSSKPPAPKLESKSPALQNHASTQNVVSKRSDYEKPFAEPHLNSASDSAEPNQNSLPNPPTETKATTTVPDRSGLATNQPAPVDVHDSSEERVTREQVQNATKETEAPKKKKSFWASILSCCSGSNEDT.

In terms of domain architecture, Protein kinase spans 12–274 (YKVGRRIGEG…FDATPDYDYL (263 aa)). ATP contacts are provided by residues 18–26 (IGEGSFGVI) and Lys41. Residue Asp131 is the Proton acceptor of the active site. Positions 308–430 (KSRNAETENQ…ETEAPKKKKS (123 aa)) are disordered. Ser329 carries the phosphoserine modification. Residues 332 to 345 (PALQNHASTQNVVS) are compositionally biased toward polar residues. Over residues 346–355 (KRSDYEKPFA) the composition is skewed to basic and acidic residues. The span at 360–397 (NSASDSAEPNQNSLPNPPTETKATTTVPDRSGLATNQP) shows a compositional bias: polar residues. The segment covering 401–412 (DVHDSSEERVTR) has biased composition (basic and acidic residues).

It belongs to the protein kinase superfamily. CK1 Ser/Thr protein kinase family. Casein kinase I subfamily.

It is found in the cytoplasm. It carries out the reaction L-seryl-[protein] + ATP = O-phospho-L-seryl-[protein] + ADP + H(+). It catalyses the reaction L-threonyl-[protein] + ATP = O-phospho-L-threonyl-[protein] + ADP + H(+). In terms of biological role, casein kinases are operationally defined by their preferential utilization of acidic proteins such as caseins as substrates. The chain is Casein kinase I homolog 1 (cki1) from Schizosaccharomyces pombe (strain 972 / ATCC 24843) (Fission yeast).